The chain runs to 310 residues: Leucine carboxyl methyltransferase 1 (310 aa).

Residues R50, G75, D100, D145–I146, and E169 contribute to the S-adenosyl-L-methionine site.

The protein belongs to the methyltransferase superfamily. LCMT family.

It catalyses the reaction [phosphatase 2A protein]-C-terminal L-leucine + S-adenosyl-L-methionine = [phosphatase 2A protein]-C-terminal L-leucine methyl ester + S-adenosyl-L-homocysteine. In terms of biological role, methylates the carboxyl group of the C-terminal leucine residue of protein phosphatase 2A catalytic subunits to form alpha-leucine ester residues. This chain is Leucine carboxyl methyltransferase 1 (ppm1), found in Schizosaccharomyces pombe (strain 972 / ATCC 24843) (Fission yeast).